A 388-amino-acid polypeptide reads, in one-letter code: Acyl-[acyl-carrier-protein] dehydrogenase MbtN (388 aa).

Belongs to the acyl-CoA dehydrogenase family. FAD serves as cofactor.

The protein operates within siderophore biosynthesis; mycobactin biosynthesis. Its function is as follows. Catalyzes the dehydrogenation at the alpha-beta position of ACP-bound acyl chains. This results in the introduction of a double bond in the lipidic chain, which is further transferred to the epsilon-amino group of lysine residue in the mycobactin core by MbtK. In Mycolicibacterium paratuberculosis (strain ATCC BAA-968 / K-10) (Mycobacterium paratuberculosis), this protein is Acyl-[acyl-carrier-protein] dehydrogenase MbtN (mbtN).